We begin with the raw amino-acid sequence, 288 residues long: Lipoyl synthase (288 aa).

Residues Cys39, Cys44, Cys50, Cys65, Cys69, Cys72, and Ser276 each coordinate [4Fe-4S] cluster. In terms of domain architecture, Radical SAM core spans 51–265 (WGKGTATFMI…KETGLKKGFE (215 aa)).

It belongs to the radical SAM superfamily. Lipoyl synthase family. Requires [4Fe-4S] cluster as cofactor.

It localises to the cytoplasm. The catalysed reaction is [[Fe-S] cluster scaffold protein carrying a second [4Fe-4S](2+) cluster] + N(6)-octanoyl-L-lysyl-[protein] + 2 oxidized [2Fe-2S]-[ferredoxin] + 2 S-adenosyl-L-methionine + 4 H(+) = [[Fe-S] cluster scaffold protein] + N(6)-[(R)-dihydrolipoyl]-L-lysyl-[protein] + 4 Fe(3+) + 2 hydrogen sulfide + 2 5'-deoxyadenosine + 2 L-methionine + 2 reduced [2Fe-2S]-[ferredoxin]. The protein operates within protein modification; protein lipoylation via endogenous pathway; protein N(6)-(lipoyl)lysine from octanoyl-[acyl-carrier-protein]: step 2/2. Its function is as follows. Catalyzes the radical-mediated insertion of two sulfur atoms into the C-6 and C-8 positions of the octanoyl moiety bound to the lipoyl domains of lipoate-dependent enzymes, thereby converting the octanoylated domains into lipoylated derivatives. This is Lipoyl synthase from Bacteroides fragilis (strain YCH46).